A 207-amino-acid chain; its full sequence is Dephospho-CoA kinase (207 aa).

A DPCK domain is found at 5 to 202 (VVGLTGGIGS…LQYLKLSAEK (198 aa)). 13 to 18 (GSGKST) is an ATP binding site.

The protein belongs to the CoaE family.

The protein localises to the cytoplasm. The enzyme catalyses 3'-dephospho-CoA + ATP = ADP + CoA + H(+). Its pathway is cofactor biosynthesis; coenzyme A biosynthesis; CoA from (R)-pantothenate: step 5/5. Functionally, catalyzes the phosphorylation of the 3'-hydroxyl group of dephosphocoenzyme A to form coenzyme A. The polypeptide is Dephospho-CoA kinase (Dechloromonas aromatica (strain RCB)).